The sequence spans 120 residues: Putative ferric transport system permease-like protein AfuB (120 aa).

The Cytoplasmic portion of the chain corresponds to 1–38 (MESLPGQIDKSLDEASLSLRAGSLRTITHILLPLLRPA). Positions 1-102 (MESLPGQIDK…VVMLAIIFIF (102 aa)) constitute an ABC transmembrane type-1 domain. A helical transmembrane segment spans residues 39–59 (ILSALIYSFVRAITTVSAIVF). Residues 60-81 (LVTPDTRVATAYILNRVEDGEY) lie on the Periplasmic side of the membrane. Residues 82–102 (GVAIAYGSILIVVMLAIIFIF) traverse the membrane as a helical segment. Over 103–120 (DWLIGESRTSRSKAKNQA) the chain is Cytoplasmic.

This sequence belongs to the binding-protein-dependent transport system permease family. FbpB subfamily.

The protein localises to the cell inner membrane. A severely truncated paralog of the AfuB uptake protein, homologous only to the last 20% of the intact protein in Actinobacillus. This Escherichia coli (strain K12) protein is Putative ferric transport system permease-like protein AfuB (afuB).